The following is a 288-amino-acid chain: Intermediate transcription factor 3 small subunit (288 aa).

The protein belongs to the orthopoxvirus OPG134 family. As to quaternary structure, heterodimer of a 45 kDa (A23R) and a 32 kDa (A8R) subunit to form the virus intermediate transcription factor (VITF)-3.

In terms of biological role, acts with RNA polymerase to initiate transcription from intermediate gene promoters. The chain is Intermediate transcription factor 3 small subunit (OPG134) from Homo sapiens (Human).